Reading from the N-terminus, the 524-residue chain is Acetyl-CoA hydrolase (524 aa).

279–283 lines the CoA pocket; that stretch reads GIGNI. The active-site 5-glutamyl coenzyme A thioester intermediate is E304. Residue G398 participates in CoA binding.

Belongs to the acetyl-CoA hydrolase/transferase family.

The protein resides in the cytoplasm. It carries out the reaction acetyl-CoA + H2O = acetate + CoA + H(+). Functionally, presumably involved in regulating the intracellular acetyl-CoA pool for fatty acid and cholesterol synthesis and fatty acid oxidation. The chain is Acetyl-CoA hydrolase (ACH1) from Yarrowia lipolytica (strain CLIB 122 / E 150) (Yeast).